Reading from the N-terminus, the 444-residue chain is Tol-Pal system protein TolB (444 aa).

The N-terminal stretch at 1–19 is a signal peptide; that stretch reads MRNIIYFILSLLFSVTSYA.

It belongs to the TolB family. As to quaternary structure, the Tol-Pal system is composed of five core proteins: the inner membrane proteins TolA, TolQ and TolR, the periplasmic protein TolB and the outer membrane protein Pal. They form a network linking the inner and outer membranes and the peptidoglycan layer.

The protein localises to the periplasm. Part of the Tol-Pal system, which plays a role in outer membrane invagination during cell division and is important for maintaining outer membrane integrity. This Rickettsia peacockii (strain Rustic) protein is Tol-Pal system protein TolB.